The chain runs to 206 residues: Protein DEHYDRATION-INDUCED 19 (206 aa).

Phosphothreonine is present on Thr105. Ser107 is subject to Phosphoserine. Positions 142–167 (SSFISPTRSQSSPAPRQTKNVSEDKQ) are disordered. The span at 143–161 (SFISPTRSQSSPAPRQTKN) shows a compositional bias: polar residues.

Belongs to the Di19 family. In terms of assembly, interacts with ADO2/LKP2, CPK11 and CPK4. Weak interaction with CPK12 and no interactions with CPK1, CPK5 or CPK26. Post-translationally, phosphorylated within the NLS/NES region. Expressed in seedlings, roots, leaves, stems, flowers and siliques.

It is found in the nucleus. In Arabidopsis thaliana (Mouse-ear cress), this protein is Protein DEHYDRATION-INDUCED 19 (DI19-1).